The sequence spans 487 residues: Malonate-semialdehyde dehydrogenase (487 aa).

Positions 150, 152, 176, 179, 180, 229, and 251 each coordinate NAD(+). Cys284 acts as the Nucleophile in catalysis. NAD(+) is bound at residue Glu382.

Belongs to the aldehyde dehydrogenase family. IolA subfamily. As to quaternary structure, homotetramer.

The enzyme catalyses 3-oxopropanoate + NAD(+) + CoA + H2O = hydrogencarbonate + acetyl-CoA + NADH + H(+). It carries out the reaction 2-methyl-3-oxopropanoate + NAD(+) + CoA + H2O = propanoyl-CoA + hydrogencarbonate + NADH + H(+). It participates in polyol metabolism; myo-inositol degradation into acetyl-CoA; acetyl-CoA from myo-inositol: step 7/7. Functionally, catalyzes the oxidation of malonate semialdehyde (MSA) and methylmalonate semialdehyde (MMSA) into acetyl-CoA and propanoyl-CoA, respectively. Is involved in a myo-inositol catabolic pathway. Bicarbonate, and not CO2, is the end-product of the enzymatic reaction. The chain is Malonate-semialdehyde dehydrogenase from Bacillus subtilis (strain 168).